Here is a 215-residue protein sequence, read N- to C-terminus: Cytidylate kinase (215 aa).

10 to 18 contacts ATP; that stretch reads GPAASGKGT.

This sequence belongs to the cytidylate kinase family. Type 1 subfamily.

It localises to the cytoplasm. The enzyme catalyses CMP + ATP = CDP + ADP. The catalysed reaction is dCMP + ATP = dCDP + ADP. The chain is Cytidylate kinase from Bartonella tribocorum (strain CIP 105476 / IBS 506).